We begin with the raw amino-acid sequence, 219 residues long: Apoptosis regulator OPG045 (219 aa).

This sequence belongs to the orthopoxvirus OPG045 family. In terms of assembly, homodimer. Interacts with host pro-apoptotic protein BCL2L11 (via BH3 domain). Interacts with host NLRP1. Interacts with host BAK.

The protein resides in the host mitochondrion outer membrane. It is found in the host cytoplasm. Plays a role in evading host innate immune response by inhibiting host inflammasome activation. Interacts with and inhibits NLR-mediated interleukin-1 beta/IL1B production in infected cells. At the host mitochondria outer membrane, interacts with the BH3 domain of host BAK and prevents BAK from binding active BAX. In turn, host apoptosis is inhibited. This chain is Apoptosis regulator OPG045 (OPG045), found in Cynomys gunnisoni (Gunnison's prairie dog).